We begin with the raw amino-acid sequence, 396 residues long: MTAVATHAVRKIFLIATEESGDRLGASLMRELRDRLGAAVRFEGVGGRAMAREGLTSLFPIEELSIIGLSAVARRLPTILRHIRTAAHAALQAAPDVLVIIDSPDFTHRVARRVRARDPSIPIVNYVSPTVWAWRPGRAKVMRKYVDHVLALLPFEPDEYRRLQGPPCSYVGHPLTEQIATLRPNPEEQLRRDAAPPVLLVLPGSRRSEIRHHMAVFGEALGLLQAQGVAFELILPTMPHLEALIAEALKHWPLQPRVVVGENDKRAAFRIARAALAKSGTVTLELAVAGVPMVTAYRAGQLEAWIVRRRITSASVILANLVVGENVAPEYLQEECTAPTLAAALRDVLADSPLRQRQLAAFGRIDAIMSTGAQSPSACAADIVLGLLPAAAPALR.

This sequence belongs to the LpxB family.

The enzyme catalyses a lipid X + a UDP-2-N,3-O-bis[(3R)-3-hydroxyacyl]-alpha-D-glucosamine = a lipid A disaccharide + UDP + H(+). It functions in the pathway bacterial outer membrane biogenesis; LPS lipid A biosynthesis. Functionally, condensation of UDP-2,3-diacylglucosamine and 2,3-diacylglucosamine-1-phosphate to form lipid A disaccharide, a precursor of lipid A, a phosphorylated glycolipid that anchors the lipopolysaccharide to the outer membrane of the cell. The sequence is that of Lipid-A-disaccharide synthase from Rhodopseudomonas palustris (strain BisB18).